The primary structure comprises 216 residues: Dimethylamine corrinoid protein 2 (216 aa).

The B12-binding N-terminal domain occupies 1 to 91 (MASKEELLQE…EMPAGTETKK (91 aa)). In terms of domain architecture, B12-binding spans 92–216 (LGVIVNGTVE…AKAKELLLGK (125 aa)). Position 105 (histidine 105) interacts with methylcob(III)alamin.

Belongs to the methylamine corrinoid protein family.

The protein operates within one-carbon metabolism; methanogenesis from dimethylamine. In terms of biological role, acts as a methyl group carrier between MtbB and MtbA. This Methanosarcina acetivorans (strain ATCC 35395 / DSM 2834 / JCM 12185 / C2A) protein is Dimethylamine corrinoid protein 2 (mtbC2).